A 40-amino-acid chain; its full sequence is Metallothionein-1 (40 aa).

The protein belongs to the metallothionein superfamily. Type 5 family.

In terms of biological role, this protein binds cations of several transition elements. It is thought to be involved in detoxification processes. The sequence is that of Metallothionein-1 (MtnA) from Drosophila melanogaster (Fruit fly).